We begin with the raw amino-acid sequence, 82 residues long: Kappa-actitoxin-Avd4j (82 aa).

Positions 1-19 are cleaved as a signal peptide; the sequence is MNKALFLCLVVLCAAVVFA. Positions 20–31 are excised as a propeptide; the sequence is AEDLQKAKHAPF. Cystine bridges form between Cys38-Cys73, Cys40-Cys66, and Cys56-Cys74.

It belongs to the sea anemone type 3 (BDS) potassium channel toxin family. Weakly expressed in the ectodermal tissue from the distal and proximal tentacles, body wall, and oral disk.

It is found in the secreted. The protein resides in the nematocyst. Its function is as follows. Blocks Kv3 voltage-gated potassium channels. Reduces blood pressure. This is Kappa-actitoxin-Avd4j from Anemonia viridis (Snakelocks anemone).